Here is an 82-residue protein sequence, read N- to C-terminus: Beta-defensin 113 (82 aa).

An N-terminal signal peptide occupies residues 1–16 (MKILCIFLTFFFTVSC). 3 cysteine pairs are disulfide-bonded: Cys-35–Cys-61, Cys-42–Cys-56, and Cys-46–Cys-62.

It belongs to the beta-defensin family.

It localises to the secreted. Its function is as follows. Has antibacterial activity. This chain is Beta-defensin 113 (DEFB113), found in Pan troglodytes (Chimpanzee).